Reading from the N-terminus, the 156-residue chain is Small ribosomal subunit protein uS7 (156 aa).

The protein belongs to the universal ribosomal protein uS7 family. As to quaternary structure, part of the 30S ribosomal subunit. Contacts proteins S9 and S11.

In terms of biological role, one of the primary rRNA binding proteins, it binds directly to 16S rRNA where it nucleates assembly of the head domain of the 30S subunit. Is located at the subunit interface close to the decoding center, probably blocks exit of the E-site tRNA. This is Small ribosomal subunit protein uS7 from Pseudarthrobacter chlorophenolicus (strain ATCC 700700 / DSM 12829 / CIP 107037 / JCM 12360 / KCTC 9906 / NCIMB 13794 / A6) (Arthrobacter chlorophenolicus).